The following is a 207-amino-acid chain: MRKIISSKVSCDEELLELCERLSRMDIDCTIESKGNRVRVYVFGYDKDSLKXNYRTIREVMEKVKRKYQKDDEGLYKYPLFELKYPVNKNLIIDALKTLGYKVIYLEDENAIKTNVDINKFNEILGELHELSQELRFSNLGSKPVKNLVVLVSYITKKPVDDVIEEALEKGFFREEEGRIVLNKDINLAKKALLEGEDGDKDIGEER.

This is an uncharacterized protein from Methanocaldococcus jannaschii (strain ATCC 43067 / DSM 2661 / JAL-1 / JCM 10045 / NBRC 100440) (Methanococcus jannaschii).